We begin with the raw amino-acid sequence, 329 residues long: MTRTDFAQSAVASIFTGAIASHAAVLADDLGLFDALAKGKLRNRDLDRSPWLRNRIRISGALEALCRVGAVQRCTDGYELTDVGTELAGQVPVFRLWLGGYASVLAGQISIGADPATGVHGGIVAESSGAIGARYLDETIVNLLESLRPEGRICDIGCGTGARLLRVCRRVNQPGIGYDLSAKAVEAARETVDEARRIGVDIDVRQGDATALTQDHPDVDIVTQAFMTHHIAPDEYCAAVLRSYRSRFPRARYLVIFDTVPSQDSEEPEIFAPGFDYIHALQNMEPRSRGAARRMFTEAGYICREEVELAVPNSYAWVLEMRDREGPAS.

It belongs to the methyltransferase superfamily.

The enzyme catalyses indole-3-pyruvate + S-adenosyl-L-methionine = (R)-3-(indol-3-yl)-2-oxobutanoate + S-adenosyl-L-homocysteine + H(+). Its activity is regulated as follows. Strongly inhibited by the thiol reagents p-chloromercuribenzoate and N-ethylmaleimide. Partially inhibited by o-phenanthroline and 2,2'-dipyridyl. Competitively inhibited by L-tryptophan and indolmycin. Its function is as follows. Involved in the biosynthesis of the antibiotic indolmycin, an inhibitor of the bacterial tryptophan-tRNA synthetases. Catalyzes the transfer of a methyl group from S-adenosyl-L-methionine to position 3 of the aliphatic side chain of (indol-3-yl)pyruvate to yield 3-methylindolepyruvate. The chain is Indolepyruvate C-methyltransferase from Streptomyces griseus.